The sequence spans 143 residues: Large ribosomal subunit protein uL11 (143 aa).

This sequence belongs to the universal ribosomal protein uL11 family. As to quaternary structure, part of the ribosomal stalk of the 50S ribosomal subunit. Interacts with L10 and the large rRNA to form the base of the stalk. L10 forms an elongated spine to which L12 dimers bind in a sequential fashion forming a multimeric L10(L12)X complex. One or more lysine residues are methylated.

Forms part of the ribosomal stalk which helps the ribosome interact with GTP-bound translation factors. The polypeptide is Large ribosomal subunit protein uL11 (Paraburkholderia phymatum (strain DSM 17167 / CIP 108236 / LMG 21445 / STM815) (Burkholderia phymatum)).